Consider the following 485-residue polypeptide: Transcription factor E2FA (485 aa).

The span at 1–11 shows a compositional bias: low complexity; the sequence is MSGVVRSSPGS. Disordered regions lie at residues 1 to 69 and 114 to 159; these read MSGV…SNNN and SGFT…SPIT. Residues 12 to 26 are compositionally biased toward pro residues; that stretch reads SQPPPPPPHHPPSSP. Positions 114 to 125 are enriched in polar residues; sequence SGFTNIPSSPCQ. The segment covering 129–141 has biased composition (basic residues); the sequence is KGGRVNIKSKAKG. Positions 142 to 159 are enriched in polar residues; the sequence is NKSTPQTPISTNAGSPIT. Residues 167 to 232 mediate DNA binding; the sequence is RYDSSLGLLT…PFKNRILWKG (66 aa). A coiled-coil region spans residues 245–286; it reads SVLQLQAEIENLALEEQALDNQIRQTEERLRDLSENEKNQKW. A leucine-zipper region spans residues 249-277; it reads LQAEIENLALEEQALDNQIRQTEERLRDL. The tract at residues 435–450 is retinoblastoma protein binding; it reads DYWLLSNAEISMTDIW.

It belongs to the E2F/DP family. In terms of assembly, heterodimer with DP proteins. Interacts (via dimerization domain) preferentially with DPA, but also with DPB. Interacts with maize retinoblastoma-related protein RBR1. No interaction with E2FD. In terms of tissue distribution, highly expressed in the shoot apical meristem, emerging leaf primordia, and vascular tissues of young leaf primordia. Expressed in flowers, in epidermis and cortex of hypocotyls, and at lower levels in leaves.

It is found in the cytoplasm. The protein resides in the nucleus. In terms of biological role, transcription activator that binds DNA cooperatively with DP proteins through the E2 recognition site, 5'-TTTC[CG]CGC-3' found in the promoter region of a number of genes whose products are involved in cell cycle regulation or in DNA replication. The binding of retinoblastoma-related proteins represses transactivation. Regulates gene expression both positively and negatively. Activates the expression of E2FB. Involved in the control of cell-cycle progression from G1 to S phase. Stimulates cell proliferation and delays differentiation. The sequence is that of Transcription factor E2FA (E2FA) from Arabidopsis thaliana (Mouse-ear cress).